A 305-amino-acid polypeptide reads, in one-letter code: UPF0612 protein C337.02c (305 aa).

Coiled-coil stretches lie at residues 27–63 (IERY…MKYE) and 120–207 (NDMN…DARS).

It belongs to the UPF0612 family.

The protein is UPF0612 protein C337.02c of Schizosaccharomyces pombe (strain 972 / ATCC 24843) (Fission yeast).